The following is a 129-amino-acid chain: Sulfurtransferase TusD (129 aa).

C79 acts as the Cysteine persulfide intermediate in catalysis.

The protein belongs to the DsrE/TusD family. Heterohexamer, formed by a dimer of trimers. The hexameric TusBCD complex contains 2 copies each of TusB, TusC and TusD. The TusBCD complex interacts with TusE.

It is found in the cytoplasm. Functionally, part of a sulfur-relay system required for 2-thiolation of 5-methylaminomethyl-2-thiouridine (mnm(5)s(2)U) at tRNA wobble positions. Accepts sulfur from TusA and transfers it in turn to TusE. The sequence is that of Sulfurtransferase TusD from Serratia proteamaculans (strain 568).